The primary structure comprises 113 residues: Large ribosomal subunit protein bL20c (113 aa).

The protein belongs to the bacterial ribosomal protein bL20 family.

It is found in the plastid. The protein resides in the chloroplast. Its function is as follows. Binds directly to 23S ribosomal RNA and is necessary for the in vitro assembly process of the 50S ribosomal subunit. It is not involved in the protein synthesizing functions of that subunit. This is Large ribosomal subunit protein bL20c from Staurastrum punctulatum (Green alga).